The chain runs to 811 residues: Glycerol-3-phosphate acyltransferase (811 aa).

The short motif at 303–308 (CHRSHM) is the HXXXXD motif element.

Belongs to the GPAT/DAPAT family.

It localises to the cell inner membrane. The enzyme catalyses sn-glycerol 3-phosphate + an acyl-CoA = a 1-acyl-sn-glycero-3-phosphate + CoA. Its pathway is phospholipid metabolism; CDP-diacylglycerol biosynthesis; CDP-diacylglycerol from sn-glycerol 3-phosphate: step 1/3. This Glaesserella parasuis serovar 5 (strain SH0165) (Haemophilus parasuis) protein is Glycerol-3-phosphate acyltransferase.